Reading from the N-terminus, the 781-residue chain is DNA polymerase (781 aa).

Belongs to the DNA polymerase type-B family.

The enzyme catalyses DNA(n) + a 2'-deoxyribonucleoside 5'-triphosphate = DNA(n+1) + diphosphate. This is DNA polymerase (pol) from Archaeoglobus fulgidus (strain ATCC 49558 / DSM 4304 / JCM 9628 / NBRC 100126 / VC-16).